The sequence spans 157 residues: Phosphopantetheine adenylyltransferase (157 aa).

Ser9 is a binding site for substrate. ATP is bound by residues 9 to 10 (SF) and His17. Residues Lys41, Leu73, and Lys87 each coordinate substrate. Residues 88–90 (GLR), Glu98, and 123–129 (YSFLSSS) each bind ATP.

It belongs to the bacterial CoaD family. In terms of assembly, homohexamer. It depends on Mg(2+) as a cofactor.

It localises to the cytoplasm. The catalysed reaction is (R)-4'-phosphopantetheine + ATP + H(+) = 3'-dephospho-CoA + diphosphate. It functions in the pathway cofactor biosynthesis; coenzyme A biosynthesis; CoA from (R)-pantothenate: step 4/5. Its function is as follows. Reversibly transfers an adenylyl group from ATP to 4'-phosphopantetheine, yielding dephospho-CoA (dPCoA) and pyrophosphate. The sequence is that of Phosphopantetheine adenylyltransferase from Alkaliphilus oremlandii (strain OhILAs) (Clostridium oremlandii (strain OhILAs)).